A 520-amino-acid chain; its full sequence is 4-hydroxyphenylacetate 3-monooxygenase oxygenase component (520 aa).

It belongs to the FADH(2)-utilizing monooxygenase family. As to quaternary structure, 4-HPA 3-monooxygenase consists of a reductase component HpaC and an oxygenase component HpaB.

It catalyses the reaction 4-hydroxyphenylacetate + FADH2 + O2 = 3,4-dihydroxyphenylacetate + FAD + H2O + H(+). Its pathway is aromatic compound metabolism; 4-hydroxyphenylacetate degradation; pyruvate and succinate semialdehyde from 4-hydroxyphenylacetate: step 1/7. Utilizes FADH(2) supplied by HpaC or by another flavin reductase, to catalyze the hydroxylation of 4-hydroxyphenylacetic acid, leading to the production of 3,4-DHPA. Can also oxidize phenol to catechol, and hydroxylate other phenol derivatives. This Escherichia coli protein is 4-hydroxyphenylacetate 3-monooxygenase oxygenase component (hpaB).